Consider the following 363-residue polypeptide: Double-strand-specific pac1 ribonuclease (363 aa).

Disordered regions lie at residues 1–35 (MGRFKRHHEGDSDSSSSASDSLSRGRRSLGHKRSS) and 92–138 (SRHD…PPLR). The span at 13 to 22 (DSSSSASDSL) shows a compositional bias: low complexity. Positions 24–35 (RGRRSLGHKRSS) are enriched in basic residues. Ser122 is modified (phosphoserine). Positions 139–262 (SEKLKEQVFM…YLGALILDGQ (124 aa)) constitute an RNase III domain. The DRBM domain occupies 285–356 (RPIDKLAKSK…AMQALEVLAK (72 aa)).

Requires Mg(2+) as cofactor.

The catalysed reaction is Endonucleolytic cleavage to 5'-phosphomonoester.. Functionally, digests double-stranded RNA. Converts long double-stranded RNAs into short oligonucleotides, leaving 5'-phosphates on their cleavage products. Probably inhibits mating and meiosis by degrading a specific mRNA required for sexual development. This chain is Double-strand-specific pac1 ribonuclease (pac1), found in Schizosaccharomyces pombe (strain 972 / ATCC 24843) (Fission yeast).